We begin with the raw amino-acid sequence, 368 residues long: MARRSVSIFNRLLANPPSPFTSLSRSITYMPRPGDGAPRTVTLIPGDGIGPLVTGAVEQVMEAMHAPVHFERYEVLGNMRKVPEEVIESVKRNKVCLKGGLATPVGGGVSSLNMQLRKELDIFASLVNCINVPGLVTRHENVDIVVIRENTEGEYSGLEHEVVPGVVESLKVITKFCSERIARYAFEYAYLNNRKKVTAVHKANIMKLADGLFLESCREVAKHYSGITYNEIIVDNCCMQLVAKPEQFDVMVTPNLYGNLIANTAAGIAGGTGVMPGGNVGAEHAIFEQGASAGNVGNDKMVEQKKANPVALLLSSAMMLRHLRFPTFADRLETAVKQVIKEGKYRTKDLGGDCTTQEVVDAVIAALE.

A mitochondrion-targeting transit peptide spans 1 to 26; the sequence is MARRSVSIFNRLLANPPSPFTSLSRS.

The protein belongs to the isocitrate and isopropylmalate dehydrogenases family. In terms of assembly, heterooligomer of catalytic and regulatory subunits. Interacts with 14-3-3-like proteins GRF1 GRF3 and GRF8. In terms of tissue distribution, mainly expressed at a low level in pollen.

It localises to the mitochondrion. In terms of biological role, performs an essential role in the oxidative function of the citric acid cycle. This chain is Isocitrate dehydrogenase [NAD] regulatory subunit 3, mitochondrial (IDH3), found in Arabidopsis thaliana (Mouse-ear cress).